We begin with the raw amino-acid sequence, 522 residues long: 2-isopropylmalate synthase (522 aa).

The region spanning 5–267 (VIIFDTTLRD…YTNINAREIH (263 aa)) is the Pyruvate carboxyltransferase domain. Residues aspartate 14, histidine 202, histidine 204, and asparagine 238 each coordinate Mn(2+). The regulatory domain stretch occupies residues 392-522 (VMEQLVVQSD…MQQTRELGGV (131 aa)).

It belongs to the alpha-IPM synthase/homocitrate synthase family. LeuA type 1 subfamily. Homodimer. Mn(2+) is required as a cofactor.

The protein resides in the cytoplasm. It carries out the reaction 3-methyl-2-oxobutanoate + acetyl-CoA + H2O = (2S)-2-isopropylmalate + CoA + H(+). Its pathway is amino-acid biosynthesis; L-leucine biosynthesis; L-leucine from 3-methyl-2-oxobutanoate: step 1/4. In terms of biological role, catalyzes the condensation of the acetyl group of acetyl-CoA with 3-methyl-2-oxobutanoate (2-ketoisovalerate) to form 3-carboxy-3-hydroxy-4-methylpentanoate (2-isopropylmalate). The protein is 2-isopropylmalate synthase of Shewanella amazonensis (strain ATCC BAA-1098 / SB2B).